A 304-amino-acid polypeptide reads, in one-letter code: Thiosulfate sulfurtransferase TUM1 (304 aa).

2 consecutive Rhodanese domains span residues 20–137 and 177–299; these read KVHR…PLDS and LAKK…PEWI. A compositionally biased stretch (basic and acidic residues) spans 191–201; the sequence is RFEGTEPEPRS. Positions 191–222 are disordered; the sequence is RFEGTEPEPRSDIPSGHIPGTQPLPYGSLLDP. Phosphoserine is present on serine 201. Cysteine 259 serves as the catalytic Cysteine persulfide intermediate. The residue at position 264 (serine 264) is a Phosphoserine.

The protein localises to the mitochondrion. Its subcellular location is the cytoplasm. The enzyme catalyses thiosulfate + hydrogen cyanide = thiocyanate + sulfite + 2 H(+). Functionally, sulfur transferase that accepts persulfite from NFS1 and transfers it to UBA4 in the pathway for 2-thiolation of the wobble uridine base of tRNAs. Stimulates sulfur transfer by NFS1. Involved in metabolism of sterol esters in a tRNA thiolation pathway-independent manner. The sequence is that of Thiosulfate sulfurtransferase TUM1 from Saccharomyces cerevisiae (strain ATCC 204508 / S288c) (Baker's yeast).